The chain runs to 77 residues: Chassatide C13 (77 aa).

The first 24 residues, 1-24 (MAKFATQLLLFVLIASLVMLEVHA), serve as a signal peptide directing secretion. Positions 25–44 (SNTFQVPDLGKRLLMNRDPN) are cleaved as a propeptide — removed in mature form. The segment at residues 45–75 (GFPCAESCVYIPCTVTALLGCSCRNRVCYRN) is a cross-link (cyclopeptide (Gly-Asn)). Cystine bridges form between Cys-48-Cys-65, Cys-52-Cys-67, and Cys-57-Cys-72. Residues 76-77 (EL) constitute a propeptide, removed in mature form.

This is a cyclic peptide. Expressed in fruit and pedicel but not in root, leaf and stem (at protein level).

In terms of biological role, probably participates in a plant defense mechanism. This Chassalia chartacea (Chassalia curviflora) protein is Chassatide C13.